Here is a 172-residue protein sequence, read N- to C-terminus: Adenylate kinase isoenzyme 6 (172 aa).

ATP contacts are provided by Gly13, Gly15, Lys16, Thr17, and Thr18. The segment at 33–56 (NVGDLAREGQLYDGYDEEYDCPIL) is NMPbind. Residues 108-118 (NRGYNEKKLKD) are LID. ATP is bound by residues Arg109 and Lys148.

The protein belongs to the adenylate kinase family. AK6 subfamily. In terms of assembly, monomer and homodimer. Interacts with small ribosomal subunit protein uS11. Not a structural component of 43S pre-ribosomes, but transiently interacts with them by binding to uS11. Interacts with COIL (via C-terminus).

The protein localises to the cytoplasm. It localises to the nucleus. Its subcellular location is the nucleoplasm. The protein resides in the cajal body. It carries out the reaction AMP + ATP = 2 ADP. The enzyme catalyses ATP + H2O = ADP + phosphate + H(+). Broad-specificity nucleoside monophosphate (NMP) kinase that catalyzes the reversible transfer of the terminal phosphate group between nucleoside triphosphates and monophosphates. Also has ATPase activity. Involved in the late cytoplasmic maturation steps of the 40S ribosomal particles, specifically 18S rRNA maturation. While NMP activity is not required for ribosome maturation, ATPase activity is. Associates transiently with small ribosomal subunit protein uS11. ATP hydrolysis breaks the interaction with uS11. May temporarily remove uS11 from the ribosome to enable a conformational change of the ribosomal RNA that is needed for the final maturation step of the small ribosomal subunit. Its NMP activity may have a role in nuclear energy homeostasis. May be involved in regulation of Cajal body (CB) formation. In Bos taurus (Bovine), this protein is Adenylate kinase isoenzyme 6.